A 164-amino-acid chain; its full sequence is Phosphopantetheine adenylyltransferase (164 aa).

Residue serine 10 coordinates substrate. Residues 10–11 (SF) and histidine 18 each bind ATP. Residues lysine 42, leucine 74, and arginine 88 each contribute to the substrate site. ATP contacts are provided by residues 89-91 (GLR), glutamate 99, and 124-130 (YSFLSSS).

This sequence belongs to the bacterial CoaD family. Homohexamer. Requires Mg(2+) as cofactor.

It localises to the cytoplasm. It catalyses the reaction (R)-4'-phosphopantetheine + ATP + H(+) = 3'-dephospho-CoA + diphosphate. Its pathway is cofactor biosynthesis; coenzyme A biosynthesis; CoA from (R)-pantothenate: step 4/5. Its function is as follows. Reversibly transfers an adenylyl group from ATP to 4'-phosphopantetheine, yielding dephospho-CoA (dPCoA) and pyrophosphate. The chain is Phosphopantetheine adenylyltransferase from Bacillus licheniformis (strain ATCC 14580 / DSM 13 / JCM 2505 / CCUG 7422 / NBRC 12200 / NCIMB 9375 / NCTC 10341 / NRRL NRS-1264 / Gibson 46).